Here is a 522-residue protein sequence, read N- to C-terminus: Occludin (522 aa).

The interval 1-20 (MSSRPLESPPPYRPDEFKPN) is disordered. Residues 1 to 66 (MSSRPLESPP…KWTSPPGVIR (66 aa)) lie on the Cytoplasmic side of the membrane. The region spanning 60-269 (SPPGVIRILS…IIFFAVKTRR (210 aa)) is the MARVEL domain. A helical membrane pass occupies residues 67 to 89 (ILSMLIIVMCIAIFACVASTLAW). The Extracellular segment spans residues 90 to 135 (DRGYGTSLLGGSVGYPYGGSGFGSYGSGYGYGYGYGYGYGGYTDPR). The chain crosses the membrane as a helical span at residues 136-160 (AAKGFMLAMAAFCFIAALVIFVTSV). Topologically, residues 161–170 (IRSEMSRTRR) are cytoplasmic. A helical membrane pass occupies residues 171–195 (YYLSVIIVSAILGIMVFIATIVYIM). Topologically, residues 196–243 (GVNPTAQSSGSLYGSQIYALCNQFYTPAATGLYVDQYLYHYCVVDPQE) are extracellular. A disulfide bridge links C216 with C237. The chain crosses the membrane as a helical span at residues 244 to 265 (AIAIVLGFMIIVAFALIIFFAV). The Cytoplasmic segment spans residues 266-522 (KTRRKMDRYD…MVGDYDRQKT (257 aa)). At S302 the chain carries Phosphoserine. T305 bears the Phosphothreonine mark. Phosphoserine occurs at positions 313, 321, and 340. Positions 360 to 407 (VDDFRQPRYSSGGNFETPSKRAPAKGRAGRSKRTEQDHYETDYTTGGE) are disordered. A compositionally biased stretch (polar residues) spans 367–376 (RYSSGGNFET). The residue at position 368 (Y368) is a Phosphotyrosine. Residues S369 and S370 each carry the phosphoserine modification. Positions 381-390 (APAKGRAGRS) are enriched in basic residues. The segment covering 391 to 400 (KRTEQDHYET) has biased composition (basic and acidic residues). Residues Y398 and Y402 each carry the phosphotyrosine modification. Phosphothreonine; by PKC/PRKCH is present on residues T403 and T404. Phosphoserine is present on S408. Residues 414 to 522 (EDWIREYPPI…MVGDYDRQKT (109 aa)) enclose the OCEL domain. Residues 426-489 (DQQRQLYKRN…EYNRLKQVKG (64 aa)) adopt a coiled-coil conformation. S490 carries the phosphoserine modification.

It belongs to the ELL/occludin family. As to quaternary structure, interacts with TJP1/ZO1. Interacts with VAPA. Interacts with CLDN1, CLDN6, CLDN9, CLDN11, CLDN12 and CLDN17. Interacts with PLSCR1. Interacts with LSR, ILDR1 and ILDR2. Interacts with TJP2/ZO2. Post-translationally, dephosphorylated by PTPRJ. The tyrosine phosphorylation on Tyr-398 and Tyr-402 reduces its ability to interact with TJP1. Phosphorylation at Ser-490 also attenuates the interaction with TJP1. In terms of processing, (Microbial infection) Cleaved by S.pyogenes SpeB protease; leading to its degradation. Degradation by SpeB promotes bacterial translocation across the host epithelial barrier. In terms of tissue distribution, localized at tight junctions of both epithelial and endothelial cells. Highly expressed in kidney. Not detected in testis.

Its subcellular location is the cell membrane. The protein resides in the cell junction. It is found in the tight junction. Its function is as follows. May play a role in the formation and regulation of the tight junction (TJ) paracellular permeability barrier. It is able to induce adhesion when expressed in cells lacking tight junctions. In terms of biological role, (Microbial infection) Acts as a coreceptor for hepatitis C virus (HCV) in hepatocytes. In Homo sapiens (Human), this protein is Occludin (OCLN).